A 294-amino-acid polypeptide reads, in one-letter code: Lysozyme M1 (294 aa).

Residues 81–294 form the Ch-type lysozyme domain; that stretch reads GVQGIDVSHW…RLLALANNTA (214 aa). Catalysis depends on residues Asp86, Asp175, and Glu177. A disulfide bridge links Cys185 with Cys224.

It belongs to the glycosyl hydrolase 25 family.

The protein localises to the secreted. It carries out the reaction Hydrolysis of (1-&gt;4)-beta-linkages between N-acetylmuramic acid and N-acetyl-D-glucosamine residues in a peptidoglycan and between N-acetyl-D-glucosamine residues in chitodextrins.. Functionally, this enzyme has both lysozyme (acetylmuramidase) and diacetylmuramidase activities. This chain is Lysozyme M1 (acm), found in Streptomyces globisporus.